The following is a 243-amino-acid chain: Pyridoxine 5'-phosphate synthase (243 aa).

Asn-7 contacts 3-amino-2-oxopropyl phosphate. Position 9-10 (Asp-9–His-10) interacts with 1-deoxy-D-xylulose 5-phosphate. Arg-18 contacts 3-amino-2-oxopropyl phosphate. His-43 (proton acceptor) is an active-site residue. 2 residues coordinate 1-deoxy-D-xylulose 5-phosphate: Arg-45 and His-50. Residue Glu-70 is the Proton acceptor of the active site. Residue Thr-100 participates in 1-deoxy-D-xylulose 5-phosphate binding. His-191 serves as the catalytic Proton donor. Residues Gly-192 and Gly-213 to His-214 contribute to the 3-amino-2-oxopropyl phosphate site.

Belongs to the PNP synthase family. In terms of assembly, homooctamer; tetramer of dimers.

It localises to the cytoplasm. The enzyme catalyses 3-amino-2-oxopropyl phosphate + 1-deoxy-D-xylulose 5-phosphate = pyridoxine 5'-phosphate + phosphate + 2 H2O + H(+). It functions in the pathway cofactor biosynthesis; pyridoxine 5'-phosphate biosynthesis; pyridoxine 5'-phosphate from D-erythrose 4-phosphate: step 5/5. Its function is as follows. Catalyzes the complicated ring closure reaction between the two acyclic compounds 1-deoxy-D-xylulose-5-phosphate (DXP) and 3-amino-2-oxopropyl phosphate (1-amino-acetone-3-phosphate or AAP) to form pyridoxine 5'-phosphate (PNP) and inorganic phosphate. The chain is Pyridoxine 5'-phosphate synthase from Magnetococcus marinus (strain ATCC BAA-1437 / JCM 17883 / MC-1).